The primary structure comprises 364 residues: tRNA-specific 2-thiouridylase MnmA 1 (364 aa).

Residues G11 to S18 and F37 contribute to the ATP site. Residue C96 is the Nucleophile of the active site. A disulfide bridge links C96 with C193. G120 is a binding site for ATP. The interaction with tRNA stretch occupies residues K142 to Q144. C193 functions as the Cysteine persulfide intermediate in the catalytic mechanism. The segment at R309–Y310 is interaction with tRNA.

The protein belongs to the MnmA/TRMU family.

The protein localises to the cytoplasm. The enzyme catalyses S-sulfanyl-L-cysteinyl-[protein] + uridine(34) in tRNA + AH2 + ATP = 2-thiouridine(34) in tRNA + L-cysteinyl-[protein] + A + AMP + diphosphate + H(+). Catalyzes the 2-thiolation of uridine at the wobble position (U34) of tRNA, leading to the formation of s(2)U34. The polypeptide is tRNA-specific 2-thiouridylase MnmA 1 (Bacteroides fragilis (strain ATCC 25285 / DSM 2151 / CCUG 4856 / JCM 11019 / LMG 10263 / NCTC 9343 / Onslow / VPI 2553 / EN-2)).